A 225-amino-acid polypeptide reads, in one-letter code: Phosphoribosylformylglycinamidine synthase subunit PurQ (225 aa).

A Glutamine amidotransferase type-1 domain is found at 6–225; it reads FGVVVFPGSN…WQSILRSFAA (220 aa). C89 acts as the Nucleophile in catalysis. Catalysis depends on residues H198 and E200.

As to quaternary structure, part of the FGAM synthase complex composed of 1 PurL, 1 PurQ and 2 PurS subunits.

The protein resides in the cytoplasm. The catalysed reaction is N(2)-formyl-N(1)-(5-phospho-beta-D-ribosyl)glycinamide + L-glutamine + ATP + H2O = 2-formamido-N(1)-(5-O-phospho-beta-D-ribosyl)acetamidine + L-glutamate + ADP + phosphate + H(+). It catalyses the reaction L-glutamine + H2O = L-glutamate + NH4(+). It functions in the pathway purine metabolism; IMP biosynthesis via de novo pathway; 5-amino-1-(5-phospho-D-ribosyl)imidazole from N(2)-formyl-N(1)-(5-phospho-D-ribosyl)glycinamide: step 1/2. Part of the phosphoribosylformylglycinamidine synthase complex involved in the purines biosynthetic pathway. Catalyzes the ATP-dependent conversion of formylglycinamide ribonucleotide (FGAR) and glutamine to yield formylglycinamidine ribonucleotide (FGAM) and glutamate. The FGAM synthase complex is composed of three subunits. PurQ produces an ammonia molecule by converting glutamine to glutamate. PurL transfers the ammonia molecule to FGAR to form FGAM in an ATP-dependent manner. PurS interacts with PurQ and PurL and is thought to assist in the transfer of the ammonia molecule from PurQ to PurL. This Synechococcus sp. (strain JA-2-3B'a(2-13)) (Cyanobacteria bacterium Yellowstone B-Prime) protein is Phosphoribosylformylglycinamidine synthase subunit PurQ.